The primary structure comprises 49 residues: MRVNITLACTECGERNYISKKNKRNNPDRVEFKKYCPRDKKSTLHRETK.

Residues 20-49 (KKNKRNNPDRVEFKKYCPRDKKSTLHRETK) form a disordered region. Residues 25 to 49 (NNPDRVEFKKYCPRDKKSTLHRETK) are compositionally biased toward basic and acidic residues.

The protein belongs to the bacterial ribosomal protein bL33 family. In terms of assembly, part of the 50S ribosomal subunit. Interacts with VmlR.

The chain is Large ribosomal subunit protein bL33A (rpmGA) from Bacillus subtilis (strain 168).